Here is a 309-residue protein sequence, read N- to C-terminus: Phosphoserine phosphatase (309 aa).

Asp-97 serves as the catalytic Nucleophile. The Mg(2+) site is built by Asp-97 and Asp-99. Asp-99 serves as the catalytic Proton donor. Substrate contacts are provided by residues Glu-106, Arg-142, 186–187 (SG), and Lys-232. Asp-255 lines the Mg(2+) pocket. Asn-258 is a binding site for substrate.

The protein belongs to the HAD-like hydrolase superfamily. SerB family. Requires Mg(2+) as cofactor.

It carries out the reaction O-phospho-L-serine + H2O = L-serine + phosphate. It catalyses the reaction O-phospho-D-serine + H2O = D-serine + phosphate. It functions in the pathway amino-acid biosynthesis; L-serine biosynthesis; L-serine from 3-phospho-D-glycerate: step 3/3. This chain is Phosphoserine phosphatase (SER2), found in Saccharomyces cerevisiae (strain ATCC 204508 / S288c) (Baker's yeast).